The chain runs to 466 residues: Ribulose bisphosphate carboxylase large chain (466 aa).

K5 carries the post-translational modification N6,N6,N6-trimethyllysine. Residues N114 and T164 each contribute to the substrate site. Residue K166 is the Proton acceptor of the active site. K168 lines the substrate pocket. K192, D194, and E195 together coordinate Mg(2+). Position 192 is an N6-carboxylysine (K192). H285 functions as the Proton acceptor in the catalytic mechanism. R286, H318, and S370 together coordinate substrate.

This sequence belongs to the RuBisCO large chain family. Type I subfamily. In terms of assembly, heterohexadecamer of 8 large chains and 8 small chains; disulfide-linked. The disulfide link is formed within the large subunit homodimers. Mg(2+) serves as cofactor. In terms of processing, the disulfide bond which can form in the large chain dimeric partners within the hexadecamer appears to be associated with oxidative stress and protein turnover.

The protein resides in the plastid. It is found in the chloroplast. It catalyses the reaction 2 (2R)-3-phosphoglycerate + 2 H(+) = D-ribulose 1,5-bisphosphate + CO2 + H2O. The catalysed reaction is D-ribulose 1,5-bisphosphate + O2 = 2-phosphoglycolate + (2R)-3-phosphoglycerate + 2 H(+). In terms of biological role, ruBisCO catalyzes two reactions: the carboxylation of D-ribulose 1,5-bisphosphate, the primary event in carbon dioxide fixation, as well as the oxidative fragmentation of the pentose substrate in the photorespiration process. Both reactions occur simultaneously and in competition at the same active site. This Coriaria myrtifolia (Tanner's sumac) protein is Ribulose bisphosphate carboxylase large chain.